The primary structure comprises 217 residues: 3,4-dihydroxy-2-butanone 4-phosphate synthase (217 aa).

Residues 37 to 38, D42, 150 to 154, and E174 each bind D-ribulose 5-phosphate; these read RE and RRGHT. E38 lines the Mg(2+) pocket. Mg(2+) is bound at residue H153.

It belongs to the DHBP synthase family. Homodimer. Mg(2+) serves as cofactor. Mn(2+) is required as a cofactor.

The catalysed reaction is D-ribulose 5-phosphate = (2S)-2-hydroxy-3-oxobutyl phosphate + formate + H(+). It participates in cofactor biosynthesis; riboflavin biosynthesis; 2-hydroxy-3-oxobutyl phosphate from D-ribulose 5-phosphate: step 1/1. In terms of biological role, catalyzes the conversion of D-ribulose 5-phosphate to formate and 3,4-dihydroxy-2-butanone 4-phosphate. The protein is 3,4-dihydroxy-2-butanone 4-phosphate synthase of Desulforapulum autotrophicum (strain ATCC 43914 / DSM 3382 / VKM B-1955 / HRM2) (Desulfobacterium autotrophicum).